The chain runs to 424 residues: 3-ketoacyl-CoA thiolase A, peroxisomal (424 aa).

A peroxisome-targeting transit peptide spans 1-26 (MHRLQVVLGHLAGRPESSSALQAAPC). The interval 1 to 26 (MHRLQVVLGHLAGRPESSSALQAAPC) is PTS2-type peroxisomal targeting signal. The Acyl-thioester intermediate role is filled by C123. Residues K173 and K234 each carry the N6-acetyllysine modification. Catalysis depends on proton acceptor residues H377 and C408.

Belongs to the thiolase-like superfamily. Thiolase family. As to quaternary structure, homodimer. Interacts (via PTS2-type peroxisomal targeting signal region) with PEX7; leading to its translocation into peroxisomes. In terms of tissue distribution, mainly expressed in liver and intestine.

The protein resides in the peroxisome. The enzyme catalyses an acyl-CoA + acetyl-CoA = a 3-oxoacyl-CoA + CoA. It catalyses the reaction 2 acetyl-CoA = acetoacetyl-CoA + CoA. It carries out the reaction tetradecanoyl-CoA + acetyl-CoA = 3-oxohexadecanoyl-CoA + CoA. The catalysed reaction is hexanoyl-CoA + acetyl-CoA = 3-oxooctanoyl-CoA + CoA. The enzyme catalyses 3-oxohexadecanedioyl-CoA + CoA = tetradecanedioyl-CoA + acetyl-CoA. It catalyses the reaction 3-oxo-(6Z,9Z,12Z,15Z,18Z,21Z)-tetracosahexaenoyl-CoA + CoA = (4Z,7Z,10Z,13Z,16Z,19Z)-docosahexaenoyl-CoA + acetyl-CoA. The protein operates within lipid metabolism; peroxisomal fatty acid beta-oxidation. Its function is as follows. Responsible for the thiolytic cleavage of straight chain 3-keto fatty acyl-CoAs (3-oxoacyl-CoAs). Plays an important role in fatty acid peroxisomal beta-oxidation. Catalyzes the cleavage of short, medium, long, and very long straight chain 3-oxoacyl-CoAs. The chain is 3-ketoacyl-CoA thiolase A, peroxisomal from Mus musculus (Mouse).